A 798-amino-acid chain; its full sequence is Protocadherin beta-14 (798 aa).

A signal peptide spans 1–26 (MEIRGALDLRKRQVLIFLVLLGLSRA). Topologically, residues 27–686 (GTESAHYSVA…APAQAQADSL (660 aa)) are extracellular. 5 consecutive Cadherin domains span residues 35–133 (VAEE…SPTF), 138–242 (ILIK…APEF), 247–347 (YEVQ…PPEV), 352–451 (ITKR…APTF), and 456–561 (YTLF…SPFV). An intrachain disulfide couples Cys-96 to Cys-102. Asn-169 carries an N-linked (GlcNAc...) asparagine glycan. 5 N-linked (GlcNAc...) asparagine glycosylation sites follow: Asn-359, Asn-418, Asn-436, Asn-487, and Asn-567. The 104-residue stretch at 568–671 (GSAPCTELVP…LVDGFSQPYL (104 aa)) folds into the Cadherin 6 domain. The chain crosses the membrane as a helical span at residues 687–711 (TVYLVVALASVSSLFLFSVLLFVAV). Over 712-798 (RLCRRSRAAS…FRNSFGLNIQ (87 aa)) the chain is Cytoplasmic.

The protein localises to the cell membrane. Potential calcium-dependent cell-adhesion protein. May be involved in the establishment and maintenance of specific neuronal connections in the brain. This Homo sapiens (Human) protein is Protocadherin beta-14 (PCDHB14).